The chain runs to 520 residues: 2,3-bisphosphoglycerate-independent phosphoglycerate mutase (520 aa).

Positions 13 and 63 each coordinate Mn(2+). Serine 63 acts as the Phosphoserine intermediate in catalysis. Substrate is bound by residues histidine 124, 154–155 (RD), arginine 192, arginine 198, 268–271 (RADR), and lysine 342. Residues aspartate 409, histidine 413, aspartate 450, histidine 451, and histidine 469 each coordinate Mn(2+).

The protein belongs to the BPG-independent phosphoglycerate mutase family. As to quaternary structure, monomer. It depends on Mn(2+) as a cofactor.

The catalysed reaction is (2R)-2-phosphoglycerate = (2R)-3-phosphoglycerate. It functions in the pathway carbohydrate degradation; glycolysis; pyruvate from D-glyceraldehyde 3-phosphate: step 3/5. Functionally, catalyzes the interconversion of 2-phosphoglycerate and 3-phosphoglycerate. This chain is 2,3-bisphosphoglycerate-independent phosphoglycerate mutase, found in Colwellia psychrerythraea (strain 34H / ATCC BAA-681) (Vibrio psychroerythus).